A 282-amino-acid polypeptide reads, in one-letter code: Pantothenate synthetase (282 aa).

30–37 (MGYLHQGH) contributes to the ATP binding site. The active-site Proton donor is the His-37. Gln-61 lines the (R)-pantoate pocket. Gln-61 contributes to the beta-alanine binding site. 147–150 (GQKD) serves as a coordination point for ATP. Gln-153 contacts (R)-pantoate. Residues Val-176 and 184 to 187 (MSSR) each bind ATP.

This sequence belongs to the pantothenate synthetase family. In terms of assembly, homodimer.

It localises to the cytoplasm. It catalyses the reaction (R)-pantoate + beta-alanine + ATP = (R)-pantothenate + AMP + diphosphate + H(+). It participates in cofactor biosynthesis; (R)-pantothenate biosynthesis; (R)-pantothenate from (R)-pantoate and beta-alanine: step 1/1. Its function is as follows. Catalyzes the condensation of pantoate with beta-alanine in an ATP-dependent reaction via a pantoyl-adenylate intermediate. In Geotalea daltonii (strain DSM 22248 / JCM 15807 / FRC-32) (Geobacter daltonii), this protein is Pantothenate synthetase.